Consider the following 157-residue polypeptide: Snaclec EMS16 subunit alpha (157 aa).

Positions 1–23 (MGRFISVSFGLLVVFLSLSGTGA) are cleaved as a signal peptide. Disulfide bonds link Cys-27/Cys-38, Cys-55/Cys-152, and Cys-127/Cys-144. Residues 34–153 (YDQHCYLAIG…CEDLYPFVCK (120 aa)) enclose the C-type lectin domain.

The protein belongs to the snaclec family. As to quaternary structure, heterodimer of subunits A and B; disulfide-linked. In terms of tissue distribution, expressed by the venom gland.

It is found in the secreted. In terms of biological role, EMS16 is a potent and selective inhibitor of alpha-2/beta-1 (ITGA2/ITGB1) integrin and acts as a potent antagonist of platelet aggregation and cell migration. Binds specifically to the I domain of the alpha-2 subunit, in a metal ion-independent fashion. The polypeptide is Snaclec EMS16 subunit alpha (Echis multisquamatus (Central Asian sand viper)).